Here is a 491-residue protein sequence, read N- to C-terminus: Phosphoethanolamine N-methyltransferase 1 (491 aa).

Ala-2 bears the N-acetylalanine mark. The S-adenosyl-L-homocysteine site is built by Gly-61, Arg-66, Asp-82, Asp-107, Val-108, and Asn-126. Positions 159, 164, 165, 169, and 176 each coordinate phosphocholine. N-methylethanolamine phosphate contacts are provided by residues 245–246 and Tyr-254; that span reads QY. Residue Tyr-254 participates in phosphocholine binding. S-adenosyl-L-homocysteine-binding residues include Val-263, Ser-264, Gly-290, Asp-312, Asp-338, Cys-339, and Arg-355. Positions 386, 400, 404, 406, and 472 each coordinate phosphocholine. N-methylethanolamine phosphate contacts are provided by residues Tyr-386, Tyr-400, 404–406, and Lys-472; that span reads RGY.

Belongs to the class I-like SAM-binding methyltransferase superfamily. PEAMT family. As to expression, highly expressed in the meristem and elongation zones of the root. Expressed in differentiated root epidermal cells. Highly expressed in leaf vasculature.

The protein localises to the cytoplasm. It catalyses the reaction phosphoethanolamine + S-adenosyl-L-methionine = N-methylethanolamine phosphate + S-adenosyl-L-homocysteine + H(+). The enzyme catalyses N-methylethanolamine phosphate + S-adenosyl-L-methionine = N,N-dimethylethanolamine phosphate + S-adenosyl-L-homocysteine + H(+). It carries out the reaction N,N-dimethylethanolamine phosphate + S-adenosyl-L-methionine = phosphocholine + S-adenosyl-L-homocysteine + H(+). Its pathway is phospholipid metabolism; phosphatidylcholine biosynthesis; phosphocholine from phosphoethanolamine: step 1/1. Its function is as follows. Involved in phosphocholine biosynthesis. Catalyzes the N-methylation of phosphoethanolamine, phosphomonomethylethanolamine and phosphodimethylethanolamine, the three methylation steps required to convert phosphoethanolamine to phosphocholine (PC). Required for root system development and epidermal cell integrity through its role in choline and phospholipid metabolism. In association with NMT3, regulates PC homeostasis, phase transition at the shoot apex, coordinated organ development, and fertility. In association with NMT3, involved in phosphatidylcholine biosynthesis and vascular development. In association with NMT2, involved in the production of phosphatidylcholine in roots, essential for root development. In association with NMT2 produce phosphocholine mainly for leaf growth maintenance. Contributes to the regulation of overall root zonation dynamics through reactive oxygen species (ROS) and auxin-regulated cell differentiation. Participates in root development of primary root elongation under salt stress conditions by balancing reactive oxygen species (ROS) production and distribution through abscisic acid (ABA) signaling. This Arabidopsis thaliana (Mouse-ear cress) protein is Phosphoethanolamine N-methyltransferase 1.